Reading from the N-terminus, the 244-residue chain is 5-oxoprolinase subunit A (244 aa).

It belongs to the LamB/PxpA family. As to quaternary structure, forms a complex composed of PxpA, PxpB and PxpC.

It carries out the reaction 5-oxo-L-proline + ATP + 2 H2O = L-glutamate + ADP + phosphate + H(+). Catalyzes the cleavage of 5-oxoproline to form L-glutamate coupled to the hydrolysis of ATP to ADP and inorganic phosphate. The chain is 5-oxoprolinase subunit A from Shigella flexneri serotype 5b (strain 8401).